Reading from the N-terminus, the 112-residue chain is Divalent-cation tolerance protein CutA (112 aa).

The Cu cation site is built by Cys-16, His-83, and His-84.

Belongs to the CutA family. In terms of assembly, homotrimer. It depends on Cu cation as a cofactor.

It is found in the cytoplasm. Involved in resistance toward heavy metals. In Shigella boydii serotype 18 (strain CDC 3083-94 / BS512), this protein is Divalent-cation tolerance protein CutA.